Reading from the N-terminus, the 27-residue chain is Defensin-like protein 1 (27 aa).

Gln1 bears the Pyrrolidone carboxylic acid mark.

It belongs to the DEFL family. In terms of assembly, forms oligomers in its native state.

Its function is as follows. Possesses antifungal activity sensitive to inorganic cations. The protein is Defensin-like protein 1 of Brassica campestris (Field mustard).